The sequence spans 113 residues: UPF0342 protein SpyM3_0545 (113 aa).

The protein belongs to the UPF0342 family.

The protein is UPF0342 protein SpyM3_0545 of Streptococcus pyogenes serotype M3 (strain ATCC BAA-595 / MGAS315).